We begin with the raw amino-acid sequence, 93 residues long: Large ribosomal subunit protein bL27 (93 aa).

A propeptide spanning residues 1–8 (MIMDLQFF) is cleaved from the precursor. The segment at 8 to 29 (FSHHKGGGSTANGRNSAGRRLG) is disordered.

Belongs to the bacterial ribosomal protein bL27 family. The N-terminus is cleaved by ribosomal processing cysteine protease Prp.

The polypeptide is Large ribosomal subunit protein bL27 (Limosilactobacillus fermentum (strain NBRC 3956 / LMG 18251) (Lactobacillus fermentum)).